The chain runs to 301 residues: Probable alpha-L-glutamate ligase (301 aa).

An ATP-grasp domain is found at 104 to 287 (LQILARKGIG…VAGKIIEYLE (184 aa)). ATP-binding positions include lysine 141, 178–179 (EY), aspartate 187, and 211–213 (RSN). Positions 248, 260, and 262 each coordinate Mg(2+). Residues aspartate 248, glutamate 260, and asparagine 262 each coordinate Mn(2+).

The protein belongs to the RimK family. Mg(2+) serves as cofactor. Mn(2+) is required as a cofactor.

The chain is Probable alpha-L-glutamate ligase from Picosynechococcus sp. (strain ATCC 27264 / PCC 7002 / PR-6) (Agmenellum quadruplicatum).